The primary structure comprises 860 residues: Leucine--tRNA ligase (860 aa).

A 'HIGH' region motif is present at residues 42–52 (PYPSGRLHMGH). The 'KMSKS' region signature appears at 619–623 (KMSKS). Lys622 serves as a coordination point for ATP.

It belongs to the class-I aminoacyl-tRNA synthetase family.

The protein resides in the cytoplasm. The catalysed reaction is tRNA(Leu) + L-leucine + ATP = L-leucyl-tRNA(Leu) + AMP + diphosphate. This is Leucine--tRNA ligase from Escherichia coli O17:K52:H18 (strain UMN026 / ExPEC).